The primary structure comprises 87 residues: Large ribosomal subunit protein bL27 (87 aa).

Residues 1–21 form a disordered region; sequence MAHKKAGGSSRNGRDSESKRL.

Belongs to the bacterial ribosomal protein bL27 family.

The protein is Large ribosomal subunit protein bL27 of Burkholderia multivorans (strain ATCC 17616 / 249).